The sequence spans 170 residues: Putative beta-eliminating lyase-like protein (170 aa).

Residue Lys32 is modified to N6-(pyridoxal phosphate)lysine.

This sequence belongs to the beta-eliminating lyase family. Pyridoxal 5'-phosphate serves as cofactor.

In Dictyostelium discoideum (Social amoeba), this protein is Putative beta-eliminating lyase-like protein.